The sequence spans 588 residues: Proline--tRNA ligase (588 aa).

It belongs to the class-II aminoacyl-tRNA synthetase family. ProS type 1 subfamily. In terms of assembly, homodimer.

It is found in the cytoplasm. It carries out the reaction tRNA(Pro) + L-proline + ATP = L-prolyl-tRNA(Pro) + AMP + diphosphate. Catalyzes the attachment of proline to tRNA(Pro) in a two-step reaction: proline is first activated by ATP to form Pro-AMP and then transferred to the acceptor end of tRNA(Pro). As ProRS can inadvertently accommodate and process non-cognate amino acids such as alanine and cysteine, to avoid such errors it has two additional distinct editing activities against alanine. One activity is designated as 'pretransfer' editing and involves the tRNA(Pro)-independent hydrolysis of activated Ala-AMP. The other activity is designated 'posttransfer' editing and involves deacylation of mischarged Ala-tRNA(Pro). The misacylated Cys-tRNA(Pro) is not edited by ProRS. This chain is Proline--tRNA ligase, found in Corynebacterium glutamicum (strain R).